We begin with the raw amino-acid sequence, 398 residues long: Phosphoglycerate kinase (398 aa).

Substrate-binding positions include 21 to 23, Arg-41, 64 to 67, Arg-123, and Arg-156; these read DFN and HLGR. Residues Lys-207, Gly-294, Glu-325, and 354 to 357 contribute to the ATP site; that span reads GGDS.

It belongs to the phosphoglycerate kinase family. Monomer.

It is found in the cytoplasm. The catalysed reaction is (2R)-3-phosphoglycerate + ATP = (2R)-3-phospho-glyceroyl phosphate + ADP. Its pathway is carbohydrate degradation; glycolysis; pyruvate from D-glyceraldehyde 3-phosphate: step 2/5. In Salinibacter ruber (strain DSM 13855 / M31), this protein is Phosphoglycerate kinase.